Here is a 148-residue protein sequence, read N- to C-terminus: Transcription antitermination protein NusB (148 aa).

The protein belongs to the NusB family.

In terms of biological role, involved in transcription antitermination. Required for transcription of ribosomal RNA (rRNA) genes. Binds specifically to the boxA antiterminator sequence of the ribosomal RNA (rrn) operons. The polypeptide is Transcription antitermination protein NusB (Desulfitobacterium hafniense (strain DSM 10664 / DCB-2)).